A 311-amino-acid chain; its full sequence is tRNA-cytidine(32) 2-sulfurtransferase (311 aa).

The PP-loop motif signature appears at 45-50; sequence SGGKDS. Residues Cys120, Cys123, and Cys211 each contribute to the [4Fe-4S] cluster site.

Belongs to the TtcA family. As to quaternary structure, homodimer. Mg(2+) serves as cofactor. The cofactor is [4Fe-4S] cluster.

Its subcellular location is the cytoplasm. The catalysed reaction is cytidine(32) in tRNA + S-sulfanyl-L-cysteinyl-[cysteine desulfurase] + AH2 + ATP = 2-thiocytidine(32) in tRNA + L-cysteinyl-[cysteine desulfurase] + A + AMP + diphosphate + H(+). The protein operates within tRNA modification. Its function is as follows. Catalyzes the ATP-dependent 2-thiolation of cytidine in position 32 of tRNA, to form 2-thiocytidine (s(2)C32). The sulfur atoms are provided by the cysteine/cysteine desulfurase (IscS) system. The polypeptide is tRNA-cytidine(32) 2-sulfurtransferase (Shewanella pealeana (strain ATCC 700345 / ANG-SQ1)).